We begin with the raw amino-acid sequence, 245 residues long: Dehydrogenase/reductase SDR family member 6 (245 aa).

NAD(+)-binding positions include 16–18 (QGI), D37, and D58. Residue R144 coordinates substrate. Residue Y147 is the Proton acceptor of the active site. NAD(+)-binding positions include K151 and 180-184 (VDTPS). Positions 188 and 205 each coordinate substrate.

It belongs to the short-chain dehydrogenases/reductases (SDR) family. Homotetramer. As to expression, detected in liver, spleen and macrophages. Widely expressed.

Its subcellular location is the cytoplasm. The enzyme catalyses cis-4-hydroxy-L-proline + NAD(+) = 4-oxo-L-proline + NADH + H(+). It catalyses the reaction (R)-3-hydroxybutanoate + NAD(+) = acetoacetate + NADH + H(+). Its pathway is amino-acid metabolism. It functions in the pathway siderophore biosynthesis. In terms of biological role, NAD(H)-dependent dehydrogenase/reductase with a preference for cyclic substrates. Catalyzes stereoselective conversion of 4-oxo-L-proline to cis-4-hydroxy-L-proline, likely a detoxification mechanism for ketoprolines. Mediates the formation of 2,5-dihydroxybenzoate (2,5-DHBA), a siderophore that chelates free cytoplasmic iron and associates with LCN2, thereby regulating iron transport and homeostasis while protecting cells against free radical-induced oxidative stress. The iron-siderophore complex is imported into mitochondria, providing an iron source for mitochondrial metabolic processes in particular heme synthesis. May act as a 3-hydroxybutyrate dehydrogenase. Functionally, (Microbial infection) May play a role in susceptibility to bacterial infection by providing an assimilable source of iron that is exploited by pathogenic bacteria. Host iron-siderophore complexes can be used by bacteria to promote their own growth and pathogenicity. This Mus musculus (Mouse) protein is Dehydrogenase/reductase SDR family member 6.